The sequence spans 79 residues: D-alanyl carrier protein (79 aa).

One can recognise a Carrier domain in the interval 1 to 76; the sequence is MKEQIFDIIE…KIAARVQEKK (76 aa). Residue Ser34 is modified to O-(pantetheine 4'-phosphoryl)serine.

Belongs to the DltC family. 4'-phosphopantetheine is transferred from CoA to a specific serine of apo-DCP.

The protein localises to the cytoplasm. Its pathway is cell wall biogenesis; lipoteichoic acid biosynthesis. Its function is as follows. Carrier protein involved in the D-alanylation of lipoteichoic acid (LTA). The loading of thioester-linked D-alanine onto DltC is catalyzed by D-alanine--D-alanyl carrier protein ligase DltA. The DltC-carried D-alanyl group is further transferred to cell membrane phosphatidylglycerol (PG) by forming an ester bond, probably catalyzed by DltD. D-alanylation of LTA plays an important role in modulating the properties of the cell wall in Gram-positive bacteria, influencing the net charge of the cell wall. The sequence is that of D-alanyl carrier protein from Lactococcus lactis subsp. lactis (strain IL1403) (Streptococcus lactis).